A 635-amino-acid chain; its full sequence is Threonine--tRNA ligase (635 aa).

The tract at residues 1–144 is editing domain; sequence MQLLLIHSDY…RTIRLEGAVP (144 aa). The segment at 215–514 is catalytic; it reads PHVELMRRLE…AEEGKVPNLP (300 aa). Zn(2+) is bound by residues Cys-307, His-359, and His-483.

Belongs to the class-II aminoacyl-tRNA synthetase family. Homodimer. Requires Zn(2+) as cofactor.

The protein localises to the cytoplasm. The catalysed reaction is tRNA(Thr) + L-threonine + ATP = L-threonyl-tRNA(Thr) + AMP + diphosphate + H(+). Catalyzes the attachment of threonine to tRNA(Thr) in a two-step reaction: L-threonine is first activated by ATP to form Thr-AMP and then transferred to the acceptor end of tRNA(Thr). Also edits incorrectly charged L-seryl-tRNA(Thr). This is Threonine--tRNA ligase from Methanococcoides burtonii (strain DSM 6242 / NBRC 107633 / OCM 468 / ACE-M).